Consider the following 401-residue polypeptide: uncharacterized protein (401 aa).

The next 10 membrane-spanning stretches (helical) occupy residues 20-40, 49-69, 83-100, 104-121, 140-160, 167-187, 207-227, 248-268, 289-309, and 357-377; these read FFGE…MVLY, IMMP…LTLA, ILTA…FVFA, YVFA…SLYI, VFAV…LVGM, PVWI…IAAL, FTIY…SMLY, MLTI…VPLV, LAAA…TAAV, and GLIL…VCLL.

It belongs to the major facilitator superfamily.

It is found in the cell membrane. This is an uncharacterized protein from Bacillus subtilis (strain 168).